A 70-amino-acid chain; its full sequence is uncharacterized protein (70 aa).

This is an uncharacterized protein from Torque teno tamarin virus (isolate So-TTV2).